We begin with the raw amino-acid sequence, 664 residues long: Macrolide export ATP-binding/permease protein MacB (664 aa).

An ABC transporter domain is found at 8–246 (LEVHNLVREF…ELNKDPDAAP (239 aa)). Position 44–51 (44–51 (GQSGSGKS)) interacts with ATP. A run of 4 helical transmembrane segments spans residues 287–307 (FLTM…VALG), 543–563 (IAVI…LVSV), 587–607 (FLIE…LLSL), and 629–649 (SIVA…FLPA).

Belongs to the ABC transporter superfamily. Macrolide exporter (TC 3.A.1.122) family. In terms of assembly, homodimer. Part of the tripartite efflux system MacAB-TolC, which is composed of an inner membrane transporter, MacB, a periplasmic membrane fusion protein, MacA, and an outer membrane component, TolC. The complex forms a large protein conduit and can translocate molecules across both the inner and outer membranes. Interacts with MacA.

It is found in the cell inner membrane. Part of the tripartite efflux system MacAB-TolC. MacB is a non-canonical ABC transporter that contains transmembrane domains (TMD), which form a pore in the inner membrane, and an ATP-binding domain (NBD), which is responsible for energy generation. Confers resistance against macrolides. In Acinetobacter baylyi (strain ATCC 33305 / BD413 / ADP1), this protein is Macrolide export ATP-binding/permease protein MacB.